The chain runs to 269 residues: GTP cyclohydrolase FolE2 (269 aa).

Belongs to the GTP cyclohydrolase IV family.

The catalysed reaction is GTP + H2O = 7,8-dihydroneopterin 3'-triphosphate + formate + H(+). The protein operates within cofactor biosynthesis; 7,8-dihydroneopterin triphosphate biosynthesis; 7,8-dihydroneopterin triphosphate from GTP: step 1/1. Its function is as follows. Converts GTP to 7,8-dihydroneopterin triphosphate. The sequence is that of GTP cyclohydrolase FolE2 from Burkholderia multivorans (strain ATCC 17616 / 249).